Reading from the N-terminus, the 142-residue chain is Crustacean hyperglycemic hormones (142 aa).

Positions 1–26 (MYSKTIPAMLAIITVAYLCALPHAHA) are cleaved as a signal peptide. The residue at position 67 (Gln-67) is a Pyrrolidone carboxylic acid; partial. Intrachain disulfides connect Cys-73/Cys-109, Cys-89/Cys-105, and Cys-92/Cys-118. Residue Val-138 is modified to Valine amide.

It belongs to the arthropod CHH/MIH/GIH/VIH hormone family. In terms of processing, the N-terminus is blocked only in isoform CHH-II but not in isoform CHH-I. As to expression, produced by the medulla terminalis X-organ in the eyestalks and transported to the sinus gland where they are stored and released.

The protein localises to the secreted. Functionally, hormone found in the sinus gland of isopods and decapods which controls the blood sugar level. Has a secretagogue action over the amylase released from the midgut gland. May act as a stress hormone and may be involved in the control of molting and reproduction. This Carcinus maenas (Common shore crab) protein is Crustacean hyperglycemic hormones.